The following is a 787-amino-acid chain: Probable phosphoketolase (787 aa).

It belongs to the XFP family. It depends on thiamine diphosphate as a cofactor.

This Pediococcus pentosaceus (strain ATCC 25745 / CCUG 21536 / LMG 10740 / 183-1w) protein is Probable phosphoketolase.